The sequence spans 499 residues: Glutamyl-tRNA(Gln) amidotransferase subunit A (499 aa).

Catalysis depends on charge relay system residues lysine 80 and serine 155. Catalysis depends on serine 179, which acts as the Acyl-ester intermediate.

The protein belongs to the amidase family. GatA subfamily. Heterotrimer of A, B and C subunits.

The enzyme catalyses L-glutamyl-tRNA(Gln) + L-glutamine + ATP + H2O = L-glutaminyl-tRNA(Gln) + L-glutamate + ADP + phosphate + H(+). In terms of biological role, allows the formation of correctly charged Gln-tRNA(Gln) through the transamidation of misacylated Glu-tRNA(Gln) in organisms which lack glutaminyl-tRNA synthetase. The reaction takes place in the presence of glutamine and ATP through an activated gamma-phospho-Glu-tRNA(Gln). The chain is Glutamyl-tRNA(Gln) amidotransferase subunit A from Cupriavidus metallidurans (strain ATCC 43123 / DSM 2839 / NBRC 102507 / CH34) (Ralstonia metallidurans).